We begin with the raw amino-acid sequence, 312 residues long: DNA-directed RNA polymerase subunit alpha (312 aa).

The segment at 1-229 (MLQYQIDRIE…ELFQPLATVT (229 aa)) is alpha N-terminal domain (alpha-NTD). The alpha C-terminal domain (alpha-CTD) stretch occupies residues 246 to 312 (IPLEELNLSV…ISIPQSRTSA (67 aa)).

Belongs to the RNA polymerase alpha chain family. In terms of assembly, in cyanobacteria the RNAP catalytic core is composed of 2 alpha, 1 beta, 1 beta', 1 gamma and 1 omega subunit. When a sigma factor is associated with the core the holoenzyme is formed, which can initiate transcription.

The enzyme catalyses RNA(n) + a ribonucleoside 5'-triphosphate = RNA(n+1) + diphosphate. DNA-dependent RNA polymerase catalyzes the transcription of DNA into RNA using the four ribonucleoside triphosphates as substrates. The polypeptide is DNA-directed RNA polymerase subunit alpha (Parasynechococcus marenigrum (strain WH8102)).